Consider the following 122-residue polypeptide: Large ribosomal subunit protein uL14 (122 aa).

This sequence belongs to the universal ribosomal protein uL14 family. In terms of assembly, part of the 50S ribosomal subunit. Forms a cluster with proteins L3 and L19. In the 70S ribosome, L14 and L19 interact and together make contacts with the 16S rRNA in bridges B5 and B8.

In terms of biological role, binds to 23S rRNA. Forms part of two intersubunit bridges in the 70S ribosome. In Alkalilimnicola ehrlichii (strain ATCC BAA-1101 / DSM 17681 / MLHE-1), this protein is Large ribosomal subunit protein uL14.